The sequence spans 342 residues: MTKKIAILGASGYTGAELCRLIAGHPDMTIVALTGDRKAGQPMASVYPFLRGAGLPDLVRIEDVDFSGVDLAFCALPHATSQSVIKALPADLKVVDLSADFRLRDPADYAKWYGKDHDAPALQKQAIYGLTEFYRDQIRDARLVAGTGCNAATGQFALRPLIENGVVDLDDIIIDLICGVSGAGRALKENLLHAELSEGTHAYALGGTHRHLGEFDQEFSKVAGRKVEVQFTPHLAPFNRGILATCYVKGDAQAIHATLTAAYRGEMFIEVLPFGAAPSTHDVRGTNYCHIGVVADRRSGRAQIVAALDNLCKGSSGQAVQNANLMLGLEETAGLLGLGVFP.

The active site involves C149.

It belongs to the NAGSA dehydrogenase family. Type 1 subfamily.

The protein localises to the cytoplasm. It catalyses the reaction N-acetyl-L-glutamate 5-semialdehyde + phosphate + NADP(+) = N-acetyl-L-glutamyl 5-phosphate + NADPH + H(+). It functions in the pathway amino-acid biosynthesis; L-arginine biosynthesis; N(2)-acetyl-L-ornithine from L-glutamate: step 3/4. Functionally, catalyzes the NADPH-dependent reduction of N-acetyl-5-glutamyl phosphate to yield N-acetyl-L-glutamate 5-semialdehyde. This chain is N-acetyl-gamma-glutamyl-phosphate reductase, found in Jannaschia sp. (strain CCS1).